The following is a 303-amino-acid chain: Glycine--tRNA ligase alpha subunit (303 aa).

It belongs to the class-II aminoacyl-tRNA synthetase family. Tetramer of two alpha and two beta subunits.

It is found in the cytoplasm. It carries out the reaction tRNA(Gly) + glycine + ATP = glycyl-tRNA(Gly) + AMP + diphosphate. This is Glycine--tRNA ligase alpha subunit from Enterobacter sp. (strain 638).